Reading from the N-terminus, the 466-residue chain is Ribulose bisphosphate carboxylase large chain (466 aa).

N6,N6,N6-trimethyllysine is present on Lys5. Asn114 and Thr164 together coordinate substrate. Lys166 (proton acceptor) is an active-site residue. Lys168 provides a ligand contact to substrate. Residues Lys192, Asp194, and Glu195 each coordinate Mg(2+). The residue at position 192 (Lys192) is an N6-carboxylysine. The active-site Proton acceptor is His285. Arg286, His318, and Ser370 together coordinate substrate.

It belongs to the RuBisCO large chain family. Type I subfamily. In terms of assembly, heterohexadecamer of 8 large chains and 8 small chains; disulfide-linked. The disulfide link is formed within the large subunit homodimers. It depends on Mg(2+) as a cofactor. The disulfide bond which can form in the large chain dimeric partners within the hexadecamer appears to be associated with oxidative stress and protein turnover.

The protein localises to the plastid. Its subcellular location is the chloroplast. It carries out the reaction 2 (2R)-3-phosphoglycerate + 2 H(+) = D-ribulose 1,5-bisphosphate + CO2 + H2O. The enzyme catalyses D-ribulose 1,5-bisphosphate + O2 = 2-phosphoglycolate + (2R)-3-phosphoglycerate + 2 H(+). RuBisCO catalyzes two reactions: the carboxylation of D-ribulose 1,5-bisphosphate, the primary event in carbon dioxide fixation, as well as the oxidative fragmentation of the pentose substrate in the photorespiration process. Both reactions occur simultaneously and in competition at the same active site. The protein is Ribulose bisphosphate carboxylase large chain of Aesculus pavia (Red buckeye).